We begin with the raw amino-acid sequence, 213 residues long: MGFVIAVDGPAASGKGTVAGRLAALYGYPLLDTGLLYRAVGVAILDGAGDLDDPIAAEAVARALDLSALDRAEVRTRAAGEAASRCAVHPGVRAALLDLQQTFAAREPGSVIDGRDIGTVIAPHAPAKLYVTARPEVRAERRWKQLVGQGEDVAFEDILADIHKRDARDGGRKDAPMTQAPDAVLLDTSEMTIEQAFDAARRIVEDARARHRL.

9–17 (GPAASGKGT) is an ATP binding site.

Belongs to the cytidylate kinase family. Type 1 subfamily.

The protein localises to the cytoplasm. It catalyses the reaction CMP + ATP = CDP + ADP. The catalysed reaction is dCMP + ATP = dCDP + ADP. The protein is Cytidylate kinase of Caulobacter vibrioides (strain ATCC 19089 / CIP 103742 / CB 15) (Caulobacter crescentus).